The primary structure comprises 919 residues: Phosphoenolpyruvate carboxylase (919 aa).

Catalysis depends on residues His138 and Lys579.

Belongs to the PEPCase type 1 family. Mg(2+) is required as a cofactor.

It carries out the reaction oxaloacetate + phosphate = phosphoenolpyruvate + hydrogencarbonate. Functionally, forms oxaloacetate, a four-carbon dicarboxylic acid source for the tricarboxylic acid cycle. In Corynebacterium glutamicum (Brevibacterium saccharolyticum), this protein is Phosphoenolpyruvate carboxylase.